The sequence spans 388 residues: Chorismate synthase (388 aa).

Residues arginine 39 and arginine 45 each coordinate NADP(+). FMN contacts are provided by residues 130–132 (RSS), 251–252 (NA), alanine 296, 311–315 (KPIPT), and arginine 337.

Belongs to the chorismate synthase family. Homotetramer. FMNH2 serves as cofactor.

The catalysed reaction is 5-O-(1-carboxyvinyl)-3-phosphoshikimate = chorismate + phosphate. The protein operates within metabolic intermediate biosynthesis; chorismate biosynthesis; chorismate from D-erythrose 4-phosphate and phosphoenolpyruvate: step 7/7. In terms of biological role, catalyzes the anti-1,4-elimination of the C-3 phosphate and the C-6 proR hydrogen from 5-enolpyruvylshikimate-3-phosphate (EPSP) to yield chorismate, which is the branch point compound that serves as the starting substrate for the three terminal pathways of aromatic amino acid biosynthesis. This reaction introduces a second double bond into the aromatic ring system. The sequence is that of Chorismate synthase from Streptococcus equi subsp. equi (strain 4047).